Here is a 320-residue protein sequence, read N- to C-terminus: Nucleotide-binding protein Psyc_0118 (320 aa).

Position 32–39 (32–39 (GRSGSGKT)) interacts with ATP. 82 to 85 (DIRT) provides a ligand contact to GTP.

This sequence belongs to the RapZ-like family.

Functionally, displays ATPase and GTPase activities. The chain is Nucleotide-binding protein Psyc_0118 from Psychrobacter arcticus (strain DSM 17307 / VKM B-2377 / 273-4).